A 127-amino-acid chain; its full sequence is MRPLDIVELAEPEEVEVLEPEEDFEQFLLPVINEMREDIAALSREHGRAYLRNRSKLWEMDNMLIQIKTQVEASEESALNHLQNPDDGAEGRGTKRCEKAEEKAKEIAKMAEMLVELVRRIEKSESS.

The tract at residues 76 to 97 (ESALNHLQNPDDGAEGRGTKRC) is disordered. A coiled-coil region spans residues 92 to 126 (RGTKRCEKAEEKAKEIAKMAEMLVELVRRIEKSES).

It belongs to the MORF4 family-associated protein family. As to quaternary structure, found in a complex composed of MORF4L1, MRFAP1 and RB1. Interacts via its N-terminus with MORF4L1. Interacts with CSTB and MORF4L2.

It localises to the nucleus. It is found in the cytoplasm. The protein resides in the perinuclear region. The sequence is that of MORF4 family-associated protein 1 from Bos taurus (Bovine).